A 77-amino-acid polypeptide reads, in one-letter code: MSDVAERVKKIVVEHLGVEEAKVTENASFIDDLGADSLDTVELVMAFEEEFSVEIPDDAAEKILTVKDAIDFITANS.

A Carrier domain is found at 2-77; it reads SDVAERVKKI…DAIDFITANS (76 aa). Serine 37 carries the post-translational modification O-(pantetheine 4'-phosphoryl)serine.

The protein belongs to the acyl carrier protein (ACP) family. 4'-phosphopantetheine is transferred from CoA to a specific serine of apo-ACP by AcpS. This modification is essential for activity because fatty acids are bound in thioester linkage to the sulfhydryl of the prosthetic group.

The protein resides in the cytoplasm. It functions in the pathway lipid metabolism; fatty acid biosynthesis. Carrier of the growing fatty acid chain in fatty acid biosynthesis. The chain is Acyl carrier protein from Paramagnetospirillum magneticum (strain ATCC 700264 / AMB-1) (Magnetospirillum magneticum).